The chain runs to 289 residues: 5'-adenylylsulfate reductase-like 7 (289 aa).

Positions 1 to 23 are cleaved as a signal peptide; it reads MNLWVSIFLVSAIAGSCLPSGFA. The 121-residue stretch at 37–157 folds into the Thioredoxin domain; it reads SVIEQKCPRS…LIQFYKETTG (121 aa). N-linked (GlcNAc...) asparagine glycosylation is found at Asn132 and Asn184. The helical transmembrane segment at 198 to 218 threads the bilayer; sequence MVLALMFLSLKLAILIFPIMG.

The protein localises to the membrane. The chain is 5'-adenylylsulfate reductase-like 7 (APRL7) from Arabidopsis thaliana (Mouse-ear cress).